The following is a 64-amino-acid chain: MSGRQGGKAKPLKAPKKGEKDLSEEDVEFKKKQQEEAKKIKEMAAKAGQRGPLLGGGIKKSGKK.

Positions 1 to 64 are disordered; the sequence is MSGRQGGKAK…GGGIKKSGKK (64 aa). Positions 21 to 50 form a coiled coil; sequence DLSEEDVEFKKKQQEEAKKIKEMAAKAGQR. Over residues 28–44 the composition is skewed to basic and acidic residues; the sequence is EFKKKQQEEAKKIKEMA. A compositionally biased stretch (gly residues) spans 53–64; sequence LLGGGIKKSGKK.

It belongs to the TMA7 family.

The sequence is that of Translation machinery-associated protein 7 homolog from Caenorhabditis briggsae.